Reading from the N-terminus, the 206-residue chain is MLLSAIHFYGLLLACTFTRSYSAFKNDATEILYSHVVKPAPASPSSNSTLNQARNGGRHYAGTGSDRNNRVQVGCRELRSTKYISDGQCTSINPLKELVCAGECLPLPLLPNWIGGGYGTKYWSRRSSQEWRCVNDKTRTQRIQLQCQDGSIRTYKITVVTACKCKRYTRQHNESSHNFEGTSQAKPVQHHKERKRASKSSKHSTS.

A signal peptide spans 1-22 (MLLSAIHFYGLLLACTFTRSYS). Residues 40–68 (APASPSSNSTLNQARNGGRHYAGTGSDRN) are disordered. The segment covering 43-54 (SPSSNSTLNQAR) has biased composition (polar residues). The N-linked (GlcNAc...) asparagine glycan is linked to Asn47. Intrachain disulfides connect Cys75-Cys133, Cys89-Cys147, Cys100-Cys163, and Cys104-Cys165. A CTCK domain is found at 75-170 (CRELRSTKYI…TACKCKRYTR (96 aa)). The N-linked (GlcNAc...) asparagine glycan is linked to Asn173. A disordered region spans residues 176–206 (SHNFEGTSQAKPVQHHKERKRASKSSKHSTS). A compositionally biased stretch (basic residues) spans 188–206 (VQHHKERKRASKSSKHSTS).

It belongs to the sclerostin family. In terms of assembly, interacts with LRP6.

Its subcellular location is the secreted. Functionally, can activate or inhibit Wnt signaling in a context-dependent manner. Activates the canonical Wnt pathway whereby acts through Disheveled proteins and beta-catenin. Antagonises Wnt signaling through the canonical pathways presumably by blocking accessibility of certain WNTs to their receptors. Induces posterior neural markers via components of the canonical Wnt pathway. The polypeptide is Sclerostin domain-containing protein 1 (SOSTDC1) (Gallus gallus (Chicken)).